The following is a 304-amino-acid chain: Fluoroacetate dehalogenase (304 aa).

The 126-residue stretch at 26–151 (PALLLLHGFP…FVARAYWHWY (126 aa)) folds into the AB hydrolase-1 domain. D104 (nucleophile) is an active-site residue. The fluoroacetate site is built by R105, R108, H149, W150, and Y212. The active-site Proton acceptor is the H271.

This sequence belongs to the AB hydrolase superfamily. Epoxide hydrolase family. In terms of assembly, homodimer.

The catalysed reaction is a haloacetate + H2O = a halide anion + glycolate + H(+). The enzyme catalyses fluoroacetate + H2O = fluoride + glycolate + H(+). Functionally, catalyzes the hydrolytic defluorination of fluoroacetate to produce glycolate. Has only very low activity towards chloroacetate and bromoacetate. In Burkholderia sp, this protein is Fluoroacetate dehalogenase (fac-dex).